The chain runs to 66 residues: Large ribosomal subunit protein bL33c (66 aa).

It belongs to the bacterial ribosomal protein bL33 family.

It is found in the plastid. The protein localises to the chloroplast. The chain is Large ribosomal subunit protein bL33c from Arabis hirsuta (Hairy rock-cress).